Reading from the N-terminus, the 375-residue chain is Carbamoyl phosphate synthase small chain (375 aa).

The interval 1 to 184 (MVSLYLENGL…LDYKPFDEKT (184 aa)) is CPSase. 3 residues coordinate L-glutamine: serine 44, glycine 240, and glycine 242. Residues 188–375 (IIAVLDFGAK…KEFVELLKDF (188 aa)) enclose the Glutamine amidotransferase type-1 domain. The Nucleophile role is filled by cysteine 268. L-glutamine is bound by residues leucine 269, glutamine 272, asparagine 310, and tyrosine 313. Residues histidine 351 and glutamate 353 contribute to the active site.

This sequence belongs to the CarA family. Composed of two chains; the small (or glutamine) chain promotes the hydrolysis of glutamine to ammonia, which is used by the large (or ammonia) chain to synthesize carbamoyl phosphate. Tetramer of heterodimers (alpha,beta)4.

It carries out the reaction hydrogencarbonate + L-glutamine + 2 ATP + H2O = carbamoyl phosphate + L-glutamate + 2 ADP + phosphate + 2 H(+). The catalysed reaction is L-glutamine + H2O = L-glutamate + NH4(+). The protein operates within amino-acid biosynthesis; L-arginine biosynthesis; carbamoyl phosphate from bicarbonate: step 1/1. Its pathway is pyrimidine metabolism; UMP biosynthesis via de novo pathway; (S)-dihydroorotate from bicarbonate: step 1/3. Small subunit of the glutamine-dependent carbamoyl phosphate synthetase (CPSase). CPSase catalyzes the formation of carbamoyl phosphate from the ammonia moiety of glutamine, carbonate, and phosphate donated by ATP, constituting the first step of 2 biosynthetic pathways, one leading to arginine and/or urea and the other to pyrimidine nucleotides. The small subunit (glutamine amidotransferase) binds and cleaves glutamine to supply the large subunit with the substrate ammonia. In Helicobacter pylori (strain ATCC 700392 / 26695) (Campylobacter pylori), this protein is Carbamoyl phosphate synthase small chain.